The primary structure comprises 179 residues: Large ribosomal subunit protein uL6 (179 aa).

The segment covering 154 to 169 (EPYKGKGVKYEHEQIR) has biased composition (basic and acidic residues). The segment at 154-179 (EPYKGKGVKYEHEQIRRKAGKSGGKK) is disordered. The span at 170 to 179 (RKAGKSGGKK) shows a compositional bias: basic residues.

This sequence belongs to the universal ribosomal protein uL6 family. Part of the 50S ribosomal subunit.

In terms of biological role, this protein binds to the 23S rRNA, and is important in its secondary structure. It is located near the subunit interface in the base of the L7/L12 stalk, and near the tRNA binding site of the peptidyltransferase center. The polypeptide is Large ribosomal subunit protein uL6 (Oleidesulfovibrio alaskensis (strain ATCC BAA-1058 / DSM 17464 / G20) (Desulfovibrio alaskensis)).